An 87-amino-acid polypeptide reads, in one-letter code: Large ribosomal subunit protein bL27 (87 aa).

Positions 1–24 are disordered; sequence MATKKAGGSSRNGRDSAGRRLGVK.

Belongs to the bacterial ribosomal protein bL27 family.

In Rickettsia massiliae (strain Mtu5), this protein is Large ribosomal subunit protein bL27.